The primary structure comprises 467 residues: Hydroxyacid-oxoacid transhydrogenase, mitochondrial (467 aa).

N6-acetyllysine is present on Lys445. Position 452 is a phosphoserine (Ser452).

The protein belongs to the iron-containing alcohol dehydrogenase family. Hydroxyacid-oxoacid transhydrogenase subfamily. In terms of tissue distribution, expressed in kidney and liver.

The protein resides in the mitochondrion. It catalyses the reaction (S)-3-hydroxybutanoate + 2-oxoglutarate = (R)-2-hydroxyglutarate + acetoacetate. The enzyme catalyses 4-hydroxybutanoate + 2-oxoglutarate = (R)-2-hydroxyglutarate + succinate semialdehyde. Its function is as follows. Catalyzes the cofactor-independent reversible oxidation of gamma-hydroxybutyrate (GHB) to succinic semialdehyde (SSA) coupled to reduction of 2-ketoglutarate (2-KG) to D-2-hydroxyglutarate (D-2-HG). L-3-hydroxybutyrate (L-3-OHB) is also a substrate for HOT when using 2-KG as hydrogen acceptor, resulting in the formation of D-2-HG. This is Hydroxyacid-oxoacid transhydrogenase, mitochondrial (Adhfe1) from Rattus norvegicus (Rat).